The sequence spans 186 residues: Alkyl hydroperoxide reductase AhpD (186 aa).

Cysteine 132 serves as the catalytic Proton donor. Residues cysteine 132 and cysteine 135 are joined by a disulfide bond. The active-site Cysteine sulfenic acid (-SOH) intermediate is the cysteine 135.

The protein belongs to the AhpD family.

The enzyme catalyses N(6)-[(R)-dihydrolipoyl]-L-lysyl-[lipoyl-carrier protein] + a hydroperoxide = N(6)-[(R)-lipoyl]-L-lysyl-[lipoyl-carrier protein] + an alcohol + H2O. In terms of biological role, antioxidant protein with alkyl hydroperoxidase activity. Required for the reduction of the AhpC active site cysteine residues and for the regeneration of the AhpC enzyme activity. The chain is Alkyl hydroperoxide reductase AhpD from Anaeromyxobacter sp. (strain K).